Here is a 90-residue protein sequence, read N- to C-terminus: Small ribosomal subunit protein bS20 (90 aa).

Residues 1–27 are disordered; it reads MANSAQAKKRARQNEKRELHNASQRSA.

The protein belongs to the bacterial ribosomal protein bS20 family.

In terms of biological role, binds directly to 16S ribosomal RNA. The chain is Small ribosomal subunit protein bS20 from Coxiella burnetii (strain CbuK_Q154) (Coxiella burnetii (strain Q154)).